Consider the following 638-residue polypeptide: MGKIIGIDLGTTNSCVAVLDGGKARVIENAEGDRTTPSIIAYTDDEIIVGQPAKRQAVTNPTNTFFAIKRLIGRRFKDDEVQRDVNIMPFKIIGADNGDAWVESRGNKMAPPQVSAEILKKMKKTAEDFLGEEVTEAVITVPAYFNDSQRQATKDAGRIAGLDVKRIINEPTAAALAYGIDKKQGDNIVAVYDLGGGTFDISIIEIDSNDGDQTFEVLATNGDTHLGGEDFDNRMINYLADEFKKDQGLDLRRDPLAMQRLKEAAEKAKIELSSTNHTEVNLPYITADASGPKHLVVKITRAKLESLVEDLIQRTLEPLKVALADADLSISDINEVILVGGQTRMPKVQEAVTNFFGKEPRKDVNPDEAVAVGAAIQAGVLSGEVKDVLLLDVTPLSLGIETMGSVMTKLIEKNTTIPTKAQQVFSTADDNQSAVTIHVLQGERKQASANKSLGQFNLEGIEPAPRGQPQVEVMFDIDADGILHVSATDKKTGKKQNITIKASSGLSDEEVEQMVRDAEAHADEDAKFEELVQARNQADGLAHSTKKQVEEAGDALASDEKEKIEAAIATLETAIKGKDKEAIDTATQALIEASAKLMEIAQAKAQGEAEGQAHDAGQEKPADDVVDAEFEEVKDDKK.

The residue at position 198 (Thr-198) is a Phosphothreonine; by autocatalysis. 2 disordered regions span residues Asp-539–Asp-559 and Gln-602–Lys-638. Positions Gly-611–Asp-623 are enriched in basic and acidic residues. Residues Asp-624–Lys-638 show a composition bias toward acidic residues.

Belongs to the heat shock protein 70 family.

Acts as a chaperone. The polypeptide is Chaperone protein DnaK (Shewanella frigidimarina (strain NCIMB 400)).